A 237-amino-acid polypeptide reads, in one-letter code: tRNA (guanine-N(7)-)-methyltransferase (237 aa).

S-adenosyl-L-methionine-binding residues include Asp35, Glu60, Asn87, and Asp113. The active site involves Asp113. Positions 117 and 149 each coordinate substrate.

This sequence belongs to the class I-like SAM-binding methyltransferase superfamily. TrmB family.

The enzyme catalyses guanosine(46) in tRNA + S-adenosyl-L-methionine = N(7)-methylguanosine(46) in tRNA + S-adenosyl-L-homocysteine. It functions in the pathway tRNA modification; N(7)-methylguanine-tRNA biosynthesis. Functionally, catalyzes the formation of N(7)-methylguanine at position 46 (m7G46) in tRNA. The sequence is that of tRNA (guanine-N(7)-)-methyltransferase from Synechococcus sp. (strain WH7803).